Consider the following 88-residue polypeptide: Small ribosomal subunit protein bS20 (88 aa).

Residues 1–12 show a composition bias toward basic residues; sequence MANHKSALKRAK. The disordered stretch occupies residues 1–23; that stretch reads MANHKSALKRAKQNTIKQMRNRS.

Belongs to the bacterial ribosomal protein bS20 family.

Its function is as follows. Binds directly to 16S ribosomal RNA. In Desulfatibacillum aliphaticivorans, this protein is Small ribosomal subunit protein bS20.